A 146-amino-acid polypeptide reads, in one-letter code: Interleukin-3 (146 aa).

Positions 1–17 are cleaved as a signal peptide; that stretch reads MSSLSILHLLLLLLSLH. N-linked (GlcNAc...) asparagine glycosylation occurs at N65.

Belongs to the IL-3 family. In terms of assembly, monomer. As to expression, activated T-cells, mast cells, natural killer cells.

The protein resides in the secreted. Functionally, granulocyte/macrophage colony-stimulating factors are cytokines that act in hematopoiesis by controlling the production, differentiation, and function of 2 related white cell populations of the blood, the granulocytes and the monocytes-macrophages. In terms of biological role, this CSF induces granulocytes, macrophages, mast cells, stem cells, erythroid cells, eosinophils and megakaryocytes. The chain is Interleukin-3 (IL3) from Ovis aries (Sheep).